The primary structure comprises 422 residues: Protein king tubby 2 (422 aa).

A disordered region spans residues 49 to 169; the sequence is PSNPDQIISS…ASGHNDAEGD (121 aa). The segment covering 57–81 has biased composition (low complexity); it reads SSGSPTTVTATGTTTGSVTTTPTSP.

Belongs to the TUB family.

Its subcellular location is the cytoplasm. It localises to the nucleus. The sequence is that of Protein king tubby 2 (king-tubby2) from Culex quinquefasciatus (Southern house mosquito).